Consider the following 363-residue polypeptide: Anthranilate phosphoribosyltransferase (363 aa).

Residues Gly-85, 88-89 (GD), Thr-93, 95-98 (NVST), 113-121 (KHGNRALSS), and Ala-125 each bind 5-phospho-alpha-D-ribose 1-diphosphate. Gly-85 is a binding site for anthranilate. Mg(2+) is bound at residue Ser-97. Asn-116 contacts anthranilate. Arg-171 is a binding site for anthranilate. Mg(2+) contacts are provided by Asp-233 and Glu-234.

It belongs to the anthranilate phosphoribosyltransferase family. As to quaternary structure, homodimer. The cofactor is Mg(2+).

It carries out the reaction N-(5-phospho-beta-D-ribosyl)anthranilate + diphosphate = 5-phospho-alpha-D-ribose 1-diphosphate + anthranilate. It functions in the pathway amino-acid biosynthesis; L-tryptophan biosynthesis; L-tryptophan from chorismate: step 2/5. Functionally, catalyzes the transfer of the phosphoribosyl group of 5-phosphorylribose-1-pyrophosphate (PRPP) to anthranilate to yield N-(5'-phosphoribosyl)-anthranilate (PRA). In Gluconobacter oxydans (strain 621H) (Gluconobacter suboxydans), this protein is Anthranilate phosphoribosyltransferase.